Here is a 212-residue protein sequence, read N- to C-terminus: Thymidylate kinase (212 aa).

An ATP-binding site is contributed by 11 to 18 (GPEGAGKS).

It belongs to the thymidylate kinase family.

The enzyme catalyses dTMP + ATP = dTDP + ADP. Its function is as follows. Phosphorylation of dTMP to form dTDP in both de novo and salvage pathways of dTTP synthesis. This Streptococcus sanguinis (strain SK36) protein is Thymidylate kinase.